The following is a 124-amino-acid chain: Phosphoribosyl-ATP pyrophosphatase (124 aa).

This sequence belongs to the PRA-PH family.

It localises to the cytoplasm. The enzyme catalyses 1-(5-phospho-beta-D-ribosyl)-ATP + H2O = 1-(5-phospho-beta-D-ribosyl)-5'-AMP + diphosphate + H(+). The protein operates within amino-acid biosynthesis; L-histidine biosynthesis; L-histidine from 5-phospho-alpha-D-ribose 1-diphosphate: step 2/9. The protein is Phosphoribosyl-ATP pyrophosphatase (hisE) of Ralstonia nicotianae (strain ATCC BAA-1114 / GMI1000) (Ralstonia solanacearum).